Reading from the N-terminus, the 433-residue chain is ATP-dependent protease ATPase subunit HslU (433 aa).

ATP contacts are provided by residues valine 18, 60–65 (GVGKTE), aspartate 246, glutamate 311, and arginine 383.

The protein belongs to the ClpX chaperone family. HslU subfamily. A double ring-shaped homohexamer of HslV is capped on each side by a ring-shaped HslU homohexamer. The assembly of the HslU/HslV complex is dependent on binding of ATP.

Its subcellular location is the cytoplasm. Its function is as follows. ATPase subunit of a proteasome-like degradation complex; this subunit has chaperone activity. The binding of ATP and its subsequent hydrolysis by HslU are essential for unfolding of protein substrates subsequently hydrolyzed by HslV. HslU recognizes the N-terminal part of its protein substrates and unfolds these before they are guided to HslV for hydrolysis. The sequence is that of ATP-dependent protease ATPase subunit HslU from Rhodopseudomonas palustris (strain BisA53).